Reading from the N-terminus, the 573-residue chain is Squalene monooxygenase (573 aa).

Topologically, residues Met1–Asp19 are cytoplasmic. Residues Met1–Lys99 are interaction with MARCHF6. Residues Val20–Val40 lie within the membrane without spanning it. Over Leu41–His573 the chain is Cytoplasmic. Residues Gln61–Leu72 are required for degradation in response to high membrane cholesterol levels. The interval Glu100–His573 is sufficient for catalytic activity. FAD is bound by residues Val132–Leu133, Glu152–Arg153, Arg160, Arg233, Val249, Asp407, and Met420. Positions Pro515–His573 are hydrophobic; mediates interaction with membranes.

It belongs to the squalene monooxygenase family. In terms of assembly, interacts (via N-terminal domain) with MARCHF6. Interacts with SMIM22; this interaction modulates lipid droplet formation. FAD is required as a cofactor. In terms of processing, ubiquitinated by MARCHF6 in response to high cholesterol levels in intracellular membranes, leading to proteasomal degradation. Detected in lever (at protein level).

It is found in the microsome membrane. It localises to the endoplasmic reticulum membrane. It catalyses the reaction squalene + reduced [NADPH--hemoprotein reductase] + O2 = (S)-2,3-epoxysqualene + oxidized [NADPH--hemoprotein reductase] + H2O + H(+). Its pathway is terpene metabolism; lanosterol biosynthesis; lanosterol from farnesyl diphosphate: step 2/3. Inhibited by NB-598 ((E)N-ethyl-N-(6,6-dimethyl-2-hepten-4-ynyl)-3-[(3,3'-bi-thiophen-5-yl)methoxy]benzene-methanamine). Contrary to fungal enzymes, the mammalian enzyme is only slightly inhibited by terbinafine. In terms of biological role, catalyzes the stereospecific oxidation of squalene to (S)-2,3-epoxysqualene, and is considered to be a rate-limiting enzyme in steroid biosynthesis. The protein is Squalene monooxygenase (Sqle) of Rattus norvegicus (Rat).